The primary structure comprises 524 residues: L-lactate permease (524 aa).

13 helical membrane-spanning segments follow: residues 12–34, 38–60, 67–89, 127–149, 156–178, 193–215, 224–246, 250–267, 297–319, 339–361, 374–396, 411–433, and 505–522; these read LAVS…TVFK, IQAA…HLPF, IVQG…VWLY, LEGA…SLGF, MLCL…VGII, SMMT…IWLM, ILPA…TIFI, LADI…ALFL, WSPF…KGLL, IEVG…VTTV, SLLK…IIGI, EAVA…IGVF, and YSFG…ILSL.

The protein belongs to the lactate permease family.

The protein resides in the cell membrane. Functionally, may play a role in L-lactate transport. This is L-lactate permease (lctP) from Halalkalibacterium halodurans (strain ATCC BAA-125 / DSM 18197 / FERM 7344 / JCM 9153 / C-125) (Bacillus halodurans).